A 1011-amino-acid polypeptide reads, in one-letter code: Phosphoenolpyruvate carboxylase (1011 aa).

Catalysis depends on residues His-207 and Lys-658.

Belongs to the PEPCase type 1 family. Requires Mg(2+) as cofactor.

The catalysed reaction is oxaloacetate + phosphate = phosphoenolpyruvate + hydrogencarbonate. Functionally, forms oxaloacetate, a four-carbon dicarboxylic acid source for the tricarboxylic acid cycle. This chain is Phosphoenolpyruvate carboxylase (ppc), found in Thermosynechococcus vestitus (strain NIES-2133 / IAM M-273 / BP-1).